The sequence spans 96 residues: Gastrolith matrix protein (96 aa).

Tandem repeats lie at residues 11–15, 16–20, 21–25, 30–34, 35–39, 50–54, 55–59, 65–69, and 70–74. The tract at residues 11 to 74 is 9 X 5 AA tandem repeat of G-S-X-X-F; sequence GSAGFGSTNF…GSTGFGSSSF (64 aa). The segment at 75–96 is disordered; that stretch reads GSTSGLPYLVVIPNNPAVGGLR.

Post-translationally, the N-terminus is blocked. Expressed in the gastroliths.

It is found in the secreted. Associates with chitin and plays a role in calcification. The chain is Gastrolith matrix protein from Procambarus clarkii (Red swamp crayfish).